Here is a 257-residue protein sequence, read N- to C-terminus: Ras-related protein Rab-26 (257 aa).

Positions 1–53 are disordered; that stretch reads MSRKKTPKSKGGSVPAASTLPAAANGPRLAHPRTARPGPEAPPNGPPQSGRPS. GTP is bound by residues S73, G74, V75, G76, K77, T78, C79, S96, and T97. T78 provides a ligand contact to Mg(2+). Short sequence motifs (switch) lie at residues 87-102 and 120-137; these read GAFL…GIDF and DTAG…YYRD. Residues T97 and D120 each coordinate Mg(2+). GTP-binding residues include G123, N178, K179, D181, A209, and K210. S-geranylgeranyl cysteine attachment occurs at residues C254 and C255.

This sequence belongs to the small GTPase superfamily. Rab family. In terms of assembly, interacts with ADRA2B. Interacts with RIMS1. Mg(2+) serves as cofactor. In terms of tissue distribution, expressed in pancreas, kidney, brain, submandibular gland, and lung.

The protein localises to the cytoplasmic vesicle. It localises to the secretory vesicle membrane. Its subcellular location is the golgi apparatus membrane. It carries out the reaction GTP + H2O = GDP + phosphate + H(+). Its activity is regulated as follows. Regulated by guanine nucleotide exchange factors (GEFs) which promote the exchange of bound GDP for free GTP. Regulated by GTPase activating proteins (GAPs) which increase the GTP hydrolysis activity. Inhibited by GDP dissociation inhibitors (GDIs). In terms of biological role, the small GTPases Rab are key regulators of intracellular membrane trafficking, from the formation of transport vesicles to their fusion with membranes. Rabs cycle between an inactive GDP-bound form and an active GTP-bound form that is able to recruit to membranes different set of downstream effectors directly responsible for vesicle formation, movement, tethering and fusion. RAB26 mediates transport of ADRA2A and ADRA2B from the Golgi to the cell membrane. Plays a role in the maturation of zymogenic granules and in pepsinogen secretion in the stomach. Plays a role in the secretion of amylase from acinar granules in the parotid gland. The sequence is that of Ras-related protein Rab-26 from Rattus norvegicus (Rat).